The following is an 848-amino-acid chain: Translation initiation factor IF-2 (848 aa).

Residues 1–20 (MNESKGAVDSGLMSGKTERT) form a disordered region. The tr-type G domain occupies 346–516 (PRAPVVTVMG…LLMAELLELK (171 aa)). The segment at 355–362 (GHVDHGKT) is G1. A GTP-binding site is contributed by 355–362 (GHVDHGKT). The G2 stretch occupies residues 380 to 384 (GITQH). The segment at 402–405 (DTPG) is G3. GTP is bound by residues 402–406 (DTPGH) and 456–459 (NKID). The tract at residues 456–459 (NKID) is G4. The interval 492–494 (SAK) is G5.

Belongs to the TRAFAC class translation factor GTPase superfamily. Classic translation factor GTPase family. IF-2 subfamily.

The protein resides in the cytoplasm. One of the essential components for the initiation of protein synthesis. Protects formylmethionyl-tRNA from spontaneous hydrolysis and promotes its binding to the 30S ribosomal subunits. Also involved in the hydrolysis of GTP during the formation of the 70S ribosomal complex. The protein is Translation initiation factor IF-2 of Ehrlichia canis (strain Jake).